The chain runs to 984 residues: Pre-mRNA-splicing factor cwf10 (984 aa).

The segment at 1-28 (MMEEDLYDEFGNYIGPENEEDEEELFPQ) is disordered. The tr-type G domain maps to 139 to 402 (DDVRSFIVAG…HTLTISDEAE (264 aa)). Positions 148–155 (GHLHHGKS) are G1. Residue 148–155 (GHLHHGKS) coordinates GTP. The tract at residues 190 to 194 (VMSIK) is G2. Positions 216–219 (DTPG) are G3. Residues 216–220 (DTPGH) and 270–273 (NKVD) contribute to the GTP site. Residues 270-273 (NKVD) are G4. Residues 371–373 (QSL) are G5.

Belongs to the TRAFAC class translation factor GTPase superfamily. Classic translation factor GTPase family. EF-G/EF-2 subfamily. As to quaternary structure, belongs to the 40S cdc5-associated complex (or cwf complex), a spliceosome sub-complex reminiscent of a late-stage spliceosome composed of the U2, U5 and U6 snRNAs and at least brr2, cdc5, cwf2/prp3, cwf3/syf1, cwf4/syf3, cwf5/ecm2, spp42/cwf6, cwf7/spf27, cwf8, cwf9, cwf10, cwf11, cwf12, prp45/cwf13, cwf14, cwf15, cwf16, cwf17, cwf18, cwf19, cwf20, cwf21, cwf22, cwf23, cwf24, cwf25, cwf26, cyp7/cwf27, cwf28, cwf29/ist3, lea1, msl1, prp5/cwf1, prp10, prp12/sap130, prp17, prp22, sap61, sap62, sap114, sap145, slu7, smb1, smd1, smd3, smf1, smg1 and syf2.

The protein localises to the cytoplasm. Its subcellular location is the nucleus. In terms of biological role, component of the U5 snRNP complex required for pre-mRNA splicing. Binds GTP. This Schizosaccharomyces pombe (strain 972 / ATCC 24843) (Fission yeast) protein is Pre-mRNA-splicing factor cwf10 (cwf10).